Here is a 343-residue protein sequence, read N- to C-terminus: Thromboxane A2 receptor (343 aa).

Residues 1–29 (MWPNGSSLGPCFRPTNITLEERRLIASPW) are Extracellular-facing. Asn4 and Asn16 each carry an N-linked (GlcNAc...) asparagine glycan. The helical transmembrane segment at 30 to 52 (FAASFCVVGLASNLLALSVLAGA) threads the bilayer. Topologically, residues 53–66 (RQGGSHTRSSFLTF) are cytoplasmic. The helical transmembrane segment at 67-87 (LCGLVLTDFLGLLVTGTIVVS) threads the bilayer. Over 88–106 (QHAALFEWHAVDPGCRLCR) the chain is Extracellular. Cysteines 105 and 183 form a disulfide. A helical membrane pass occupies residues 107-128 (FMGVVMIFFGLSPLLLGAAMAS). Residues 129 to 149 (ERYLGITRPFSRPAVASQRRA) are Cytoplasmic-facing. A helical membrane pass occupies residues 150–172 (WATVGLVWAAALALGLLPLLGVG). Residues 173–193 (RYTVQYPGSWCFLTLGAESGD) lie on the Extracellular side of the membrane. The chain crosses the membrane as a helical span at residues 194–219 (VAFGLLFSMLGGLSVGLSFLLNTVSV). Over 220 to 246 (ATLCHVYHGQEAAQQRPRDSEVEMMAQ) the chain is Cytoplasmic. Residues 247-270 (LLGIMVVASVCWLPLLVFIAQTVL) traverse the membrane as a helical segment. Over 271-289 (RNPPAMSPAGQLSRTTEKE) the chain is Extracellular. The chain crosses the membrane as a helical span at residues 290 to 311 (LLIYLRVATWNQILDPWVYILF). The Cytoplasmic portion of the chain corresponds to 312–343 (RRAVLRRLQPRLSTRPRSLSLQPQLTQRSGLQ). A phosphoserine mark is found at Ser329 and Ser331.

The protein belongs to the G-protein coupled receptor 1 family. In terms of assembly, interacts with RPGRIP1L. Interacts with PSMA3. Interacts with RACK1; the interaction regulates TBXA2R cell surface expression.

The protein resides in the cell membrane. In terms of biological role, receptor for thromboxane A2 (TXA2), a potent stimulator of platelet aggregation. The activity of this receptor is mediated by a G-protein that activates a phosphatidylinositol-calcium second messenger system. In the kidney, the binding of TXA2 to glomerular TP receptors causes intense vasoconstriction. Activates phospholipase C. Functionally, activates adenylyl cyclase. Inhibits adenylyl cyclase. This is Thromboxane A2 receptor (TBXA2R) from Homo sapiens (Human).